A 166-amino-acid chain; its full sequence is Signal peptidase complex catalytic subunit SEC11 (166 aa).

Residues 1-9 (MNLRQQLTQ) lie on the Cytoplasmic side of the membrane. Residues 10–31 (LLSIAYVFTSAFVAWKALSIVA) traverse the membrane as a helical; Signal-anchor for type II membrane protein segment. Topologically, residues 32–166 (NSHSPIVVVL…MGLSALLSGE (135 aa)) are lumenal. Active-site charge relay system residues include S44, H83, and D108. The C-terminal short (CTS) helix stretch occupies residues 152-163 (ALLGFMGLSALL).

Belongs to the peptidase S26B family. As to quaternary structure, component of the signal peptidase complex (SPC) composed of a catalytic subunit SEC11 and three accessory subunits SPC1, SPC2 and SPC3. The complex induces a local thinning of the ER membrane which is used to measure the length of the signal peptide (SP) h-region of protein substrates. This ensures the selectivity of the complex towards h-regions shorter than 18-20 amino acids. SPC associates with the translocon complex.

The protein resides in the endoplasmic reticulum membrane. It catalyses the reaction Cleavage of hydrophobic, N-terminal signal or leader sequences from secreted and periplasmic proteins.. In terms of biological role, catalytic component of the signal peptidase complex (SPC) which catalyzes the cleavage of N-terminal signal sequences from nascent proteins as they are translocated into the lumen of the endoplasmic reticulum. Specifically cleaves N-terminal signal peptides that contain a hydrophobic alpha-helix (h-region) shorter than 18-20 amino acids. The polypeptide is Signal peptidase complex catalytic subunit SEC11 (SEC11) (Clavispora lusitaniae (strain ATCC 42720) (Yeast)).